We begin with the raw amino-acid sequence, 361 residues long: Phospho-N-acetylmuramoyl-pentapeptide-transferase (361 aa).

Transmembrane regions (helical) follow at residues 21–41 (YLTV…LWIG), 74–94 (MGGI…ANLA), 97–117 (YVWF…VDDY), 132–152 (WKYF…YAIG), 168–188 (VMPQ…VGTG), 199–219 (GLAI…AWAT), 239–259 (LVIF…FNTY), 264–284 (FMGD…AVLV), 288–308 (FLLV…ILQV), and 339–359 (VIIR…ITLK).

Belongs to the glycosyltransferase 4 family. MraY subfamily. The cofactor is Mg(2+).

It is found in the cell inner membrane. It catalyses the reaction UDP-N-acetyl-alpha-D-muramoyl-L-alanyl-gamma-D-glutamyl-meso-2,6-diaminopimeloyl-D-alanyl-D-alanine + di-trans,octa-cis-undecaprenyl phosphate = di-trans,octa-cis-undecaprenyl diphospho-N-acetyl-alpha-D-muramoyl-L-alanyl-D-glutamyl-meso-2,6-diaminopimeloyl-D-alanyl-D-alanine + UMP. The protein operates within cell wall biogenesis; peptidoglycan biosynthesis. In terms of biological role, catalyzes the initial step of the lipid cycle reactions in the biosynthesis of the cell wall peptidoglycan: transfers peptidoglycan precursor phospho-MurNAc-pentapeptide from UDP-MurNAc-pentapeptide onto the lipid carrier undecaprenyl phosphate, yielding undecaprenyl-pyrophosphoryl-MurNAc-pentapeptide, known as lipid I. The chain is Phospho-N-acetylmuramoyl-pentapeptide-transferase from Histophilus somni (strain 129Pt) (Haemophilus somnus).